Reading from the N-terminus, the 93-residue chain is MENDRQAIVVWMNHLKQVRSLKRFGNVHYVSRKLKYAVLYCDMAEVEDISEKVSRFHYVKRVEMSFRPFLKTEYESKKEMMYEHKNEDVQISI.

This sequence belongs to the UPF0298 family.

It is found in the cytoplasm. This Listeria welshimeri serovar 6b (strain ATCC 35897 / DSM 20650 / CCUG 15529 / CIP 8149 / NCTC 11857 / SLCC 5334 / V8) protein is UPF0298 protein lwe2074.